Reading from the N-terminus, the 580-residue chain is Phosphatase and actin regulator 1 (580 aa).

Residues Ser-67 and Ser-78 each carry the phosphoserine modification. Thr-104 is modified (phosphothreonine). The Nuclear localization signal signature appears at 108 to 129 (RRRSKFANLGRIFKPWKWRKKK). The RPEL 1 repeat unit spans residues 138–163 (AALERKISMRQSREELIKRGVLKEIY). The segment at 331–351 (EQRVPCSTSYHSSGLHSSDGV) is disordered. Residues 337–348 (STSYHSSGLHSS) show a composition bias toward low complexity. 3 RPEL repeats span residues 422 to 447 (DSLA…PRQT), 460 to 485 (TKLT…KPRN), and 498 to 523 (RRLT…IRFS). The interval 462-494 (LTRRLSQRPTAEELEQRNILKPRNEQEEQEEKR) is disordered. Ser-467 carries the post-translational modification Phosphoserine. The span at 471-494 (TAEELEQRNILKPRNEQEEQEEKR) shows a compositional bias: basic and acidic residues. Position 505 is a phosphoserine (Ser-505).

The protein belongs to the phosphatase and actin regulator family. As to quaternary structure, interacts (via RPEL repeats) with ACTA1 and PPP1CA; ACTA1 and PPP1CA compete for the same binding site. In terms of tissue distribution, selectively expressed in brain. High levels are found in the olfactory tubercle, nucleus accumbens core and shell, caudate-putamen, cerebral cortex, hippocampus and piriform cortex. Moderate to high levels in the olfactory bulb, arcuate and ventromedial hypothalamus, subthalamic nucleus, amygdala, lateral septum, habenula and thalamus. Low expression, if any, in substantia nigra pars compacta/pars reticula and globus pallidus (at protein level).

The protein localises to the cytoplasm. It localises to the synapse. The protein resides in the nucleus. Binds actin monomers (G actin) and plays a role in multiple processes including the regulation of actin cytoskeleton dynamics, actin stress fibers formation, cell motility and survival, formation of tubules by endothelial cells, and regulation of PPP1CA activity. Involved in the regulation of cortical neuron migration and dendrite arborization. The protein is Phosphatase and actin regulator 1 (Phactr1) of Rattus norvegicus (Rat).